Here is a 102-residue protein sequence, read N- to C-terminus: Small ribosomal subunit protein uS10 (102 aa).

This sequence belongs to the universal ribosomal protein uS10 family. Part of the 30S ribosomal subunit.

Functionally, involved in the binding of tRNA to the ribosomes. The chain is Small ribosomal subunit protein uS10 from Streptococcus pyogenes serotype M3 (strain SSI-1).